The following is a 219-amino-acid chain: uncharacterized protein (219 aa).

This is an uncharacterized protein from Methanocaldococcus jannaschii (strain ATCC 43067 / DSM 2661 / JAL-1 / JCM 10045 / NBRC 100440) (Methanococcus jannaschii).